A 595-amino-acid polypeptide reads, in one-letter code: ATP-dependent lipid A-core flippase (595 aa).

A disordered region spans residues 1–20; sequence MSQAYQPDSTKTSAKKSSAV. Over residues 9–19 the composition is skewed to low complexity; that stretch reads STKTSAKKSSA. A run of 4 helical transmembrane segments spans residues 41 to 61, 81 to 101, 169 to 189, and 266 to 286; these read WWAI…EIWI, GLFP…SFLG, VIAL…ILFV, and INTP…VWLA. One can recognise an ABC transmembrane type-1 domain in the interval 45–326; it reads LLTITGFAIN…LTDVNQQLQR (282 aa). The ABC transporter domain occupies 357-592; that stretch reads IKLDNISLVY…HGHYAQMYAR (236 aa). Residue 390–397 coordinates ATP; that stretch reads GRSGAGKS.

This sequence belongs to the ABC transporter superfamily. Lipid exporter (TC 3.A.1.106) family. As to quaternary structure, homodimer.

It localises to the cell inner membrane. The catalysed reaction is ATP + H2O + lipid A-core oligosaccharideSide 1 = ADP + phosphate + lipid A-core oligosaccharideSide 2.. Involved in lipopolysaccharide (LPS) biosynthesis. Translocates lipid A-core from the inner to the outer leaflet of the inner membrane. Transmembrane domains (TMD) form a pore in the inner membrane and the ATP-binding domain (NBD) is responsible for energy generation. This Psychrobacter arcticus (strain DSM 17307 / VKM B-2377 / 273-4) protein is ATP-dependent lipid A-core flippase.